The sequence spans 225 residues: PKHD-type hydroxylase Smal_0990 (225 aa).

The region spanning 78–177 is the Fe2OG dioxygenase domain; it reads KYLPPRFNRY…RVASFFWVQS (100 aa). 3 residues coordinate Fe cation: His-96, Asp-98, and His-158. Arg-168 provides a ligand contact to 2-oxoglutarate.

The cofactor is Fe(2+). L-ascorbate serves as cofactor.

In Stenotrophomonas maltophilia (strain R551-3), this protein is PKHD-type hydroxylase Smal_0990.